A 169-amino-acid polypeptide reads, in one-letter code: Large ribosomal subunit protein uL10 (169 aa).

The protein belongs to the universal ribosomal protein uL10 family. In terms of assembly, part of the ribosomal stalk of the 50S ribosomal subunit. The N-terminus interacts with L11 and the large rRNA to form the base of the stalk. The C-terminus forms an elongated spine to which L12 dimers bind in a sequential fashion forming a multimeric L10(L12)X complex.

Functionally, forms part of the ribosomal stalk, playing a central role in the interaction of the ribosome with GTP-bound translation factors. In Rickettsia bellii (strain OSU 85-389), this protein is Large ribosomal subunit protein uL10.